A 931-amino-acid chain; its full sequence is Protein phosphatase 1 regulatory subunit 37 homolog (931 aa).

Residues 20 to 71 are disordered; that stretch reads TAASSPASPIPPTSPSMFATPPHQQSHSSATSVRKKVCQEANSSADDPDSDA. Residues 41-51 show a composition bias toward polar residues; sequence PHQQSHSSATS. LRR repeat units follow at residues 232–259, 262–285, 290–314, 323–346, 351–374, 379–407, 409–430, and 435–458; these read AISLQMLNLRYTNLNDRSIPSLCKLARA, SASLTCIHLENTQMSGKNLLVLIC, NTGIRELYLGDNGLQPTDGSHIYQL, LLDLRNNNIGDSGVRHICEGLRNR, KSALSAMVLWNNNVTGASMDSLAE, NTKIETLNIGSNNLGVEGVARLKPALVSN, HLHRLGLQNTGINCEGAIILAE, and NTALLRVDIRDNPIALAGLLALHS. Positions 519 to 533 are enriched in basic and acidic residues; the sequence is QDHVSEDTEKENKDA. Disordered stretches follow at residues 519-602 and 780-807; these read QDHV…RHQR and PDCTNTCEEPTTSREAERKRAEETIRQR. Residues 534 to 547 are compositionally biased toward acidic residues; it reads DNDDKEPENEDGDT. A compositionally biased stretch (low complexity) spans 554–563; it reads SDASADQSDS. 2 stretches are compositionally biased toward basic and acidic residues: residues 564–584 and 790–807; these read PADKEKSEKSKKENNNNEKRP and TTSREAERKRAEETIRQR.

This sequence belongs to the PPP1R37 family.

This is Protein phosphatase 1 regulatory subunit 37 homolog from Caenorhabditis briggsae.